Here is a 242-residue protein sequence, read N- to C-terminus: 1-(5-phosphoribosyl)-5-[(5-phosphoribosylamino)methylideneamino] imidazole-4-carboxamide isomerase (242 aa).

Asp-10 serves as the catalytic Proton acceptor.

This sequence belongs to the HisA/HisF family.

The protein localises to the cytoplasm. The enzyme catalyses 1-(5-phospho-beta-D-ribosyl)-5-[(5-phospho-beta-D-ribosylamino)methylideneamino]imidazole-4-carboxamide = 5-[(5-phospho-1-deoxy-D-ribulos-1-ylimino)methylamino]-1-(5-phospho-beta-D-ribosyl)imidazole-4-carboxamide. It participates in amino-acid biosynthesis; L-histidine biosynthesis; L-histidine from 5-phospho-alpha-D-ribose 1-diphosphate: step 4/9. This is 1-(5-phosphoribosyl)-5-[(5-phosphoribosylamino)methylideneamino] imidazole-4-carboxamide isomerase from Corynebacterium diphtheriae (strain ATCC 700971 / NCTC 13129 / Biotype gravis).